The chain runs to 99 residues: Gibberellin-regulated protein 3 (99 aa).

A signal peptide spans 1–26 (MAIFRSTLVLLLILFCLTTFELHVHA).

Belongs to the GASA family. Six disulfide bonds may be present. Expressed in siliques, dry seeds and vasculature of roots and rosette leaves.

It is found in the secreted. Gibberellin-regulated protein that may function in hormonal controlled steps of development such as seed germination, flowering and seed maturation. This chain is Gibberellin-regulated protein 3 (GASA3), found in Arabidopsis thaliana (Mouse-ear cress).